Reading from the N-terminus, the 146-residue chain is VHLTPEEKNAVTTLWGKVNVDEVGGEALGRLLLVYPWTQRFFESFGDLSSPDAVMGNPKVKAHGKKVLGAFSDGLNHLDNLKGTFAQLSELHCDKLHVDPENFKLLGNVLVCVLAHHFGKEFTPQVQAAYQKVVAGVANALAHKYH.

Position 1 is an N-acetylvaline (Val-1). The Globin domain maps to 2–146; it reads HLTPEEKNAV…VANALAHKYH (145 aa). Thr-12 carries the post-translational modification Phosphothreonine. At Ser-44 the chain carries Phosphoserine. Position 59 is an N6-acetyllysine (Lys-59). Residue His-63 participates in heme b binding. An N6-acetyllysine modification is found at Lys-82. A heme b-binding site is contributed by His-92. S-nitrosocysteine is present on Cys-93. At Lys-144 the chain carries N6-acetyllysine.

It belongs to the globin family. In terms of assembly, heterotetramer of two alpha chains and two beta chains. Red blood cells.

In terms of biological role, involved in oxygen transport from the lung to the various peripheral tissues. In Macaca mulatta (Rhesus macaque), this protein is Hemoglobin subunit beta (HBB).